Reading from the N-terminus, the 85-residue chain is U4-theraphotoxin-Hhn1a (85 aa).

The signal sequence occupies residues 1–22 (MKVTLIAILTCAAVLVLHTTAE). Positions 23-48 (EELEAESQLMEVGMPDTELAAVDEER) are excised as a propeptide. 3 disulfide bridges follow: Cys-52/Cys-66, Cys-56/Cys-77, and Cys-71/Cys-82.

It belongs to the neurotoxin 12 (Hwtx-2) family. 02 (Hwtx-2) subfamily. Monomer. As to expression, expressed by the venom gland.

The protein resides in the secreted. Neurotoxin active on both insects and mammals. The polypeptide is U4-theraphotoxin-Hhn1a (Cyriopagopus hainanus (Chinese bird spider)).